A 911-amino-acid chain; its full sequence is Band 3 anion transport protein (911 aa).

Met-1 is modified (N-acetylmethionine). The span at 1–26 (MEELQDDYEDMMEENLEQEEYEDPDI) shows a compositional bias: acidic residues. Residues 1 to 40 (MEELQDDYEDMMEENLEQEEYEDPDIPESQMEEPAAHDTE) are disordered. Topologically, residues 1 to 403 (MEELQDDYED…LSDITDAFSP (403 aa)) are cytoplasmic. A phosphotyrosine mark is found at Tyr-8, Tyr-21, and Tyr-46. Residues 13–31 (EENLEQEEYEDPDIPESQM) are (Microbial infection) Interaction with P.falciparum (isolate K1) FBPA. A globular region spans residues 55 to 290 (HKVYVELQEL…LGRAAATLMS (236 aa)). The tract at residues 176–185 (AVLTRSGDPS) is interaction with ANK1. Phosphoserine occurs at positions 185 and 350. The segment at 304-357 (RGELLHSLEGFLDCSLVLPPTDAPSEQALLSLVPVQRELLRRRYQSSPAKPDSS) is dimerization arm. Residue Tyr-359 is modified to Phosphotyrosine. A helical membrane pass occupies residues 404-427 (QVLAAVIFIYFAALSPAITFGGLL). Residues 428–435 (GEKTRNQM) are Extracellular-facing. The chain crosses the membrane as a helical span at residues 436–456 (GVSELLISTAVQGILFALLGA). Over 457 to 459 (QPL) the chain is Cytoplasmic. Residues 460–476 (LVVGFSGPLLVFEEAFF) form a discontinuously helical membrane-spanning segment. The Extracellular portion of the chain corresponds to 477–485 (SFCETNGLE). A helical membrane pass occupies residues 486 to 506 (YIVGRVWIGFWLILLVVLVVA). Topologically, residues 507–518 (FEGSFLVRFISR) are cytoplasmic. A helical membrane pass occupies residues 519–541 (YTQEIFSFLISLIFIYETFSKLI). The Extracellular portion of the chain corresponds to 542–570 (KIFQDHPLQKTYNYNVLMVPKPQGPLPNT). An involved in anion transport region spans residues 559–630 (MVPKPQGPLP…DFFIQDTYTQ (72 aa)). A helical transmembrane segment spans residues 571 to 591 (ALLSLVLMAGTFFFAMMLRKF). Residues 592-602 (KNSSYFPGKLR) are Cytoplasmic-facing. The chain crosses the membrane as a helical span at residues 603–623 (RVIGDFGVPISILIMVLVDFF). At 624–663 (IQDTYTQKLSVPDGFKVSNSSARGWVIHPLGLRSEFPIWM) the chain is on the extracellular side. Residue Asn-642 is glycosylated (N-linked (GlcNAc...) (complex) asparagine). The helical transmembrane segment at 664-684 (MFASALPALLVFILIFLESQI) threads the bilayer. Residues 685–700 (TTLIVSKPERKMVKGS) lie on the Cytoplasmic side of the membrane. A helical transmembrane segment spans residues 701–719 (GFHLDLLLVVGMGGVAALF). The chain crosses the membrane as a discontinuously helical span at residues 720–737 (GMPWLSATTVRSVTHANA). A (Microbial infection) 5ABC region; interaction with P.falciparum (isolate 3D7) MSP9 region spans residues 720–761 (GMPWLSATTVRSVTHANALTVMGKASTPGAAAQIQEVKEQRI). The Cytoplasmic segment spans residues 738–760 (LTVMGKASTPGAAAQIQEVKEQR). A run of 2 helical transmembrane segments spans residues 761 to 781 (ISGL…PILS) and 782 to 800 (RIPL…VTSL). At 801 to 838 (SGIQLFDRILLLFKPPKYHPDVPYVKRVKTWRMHLFTG) the chain is on the cytoplasmic side. Residues 839-869 (IQIICLAVLWVVKSTPASLALPFVLILTVPL) constitute an intramembrane region (discontinuously helical). The S-palmitoyl cysteine moiety is linked to residue Cys-843. The Cytoplasmic portion of the chain corresponds to 870–911 (RRVLLPLIFRNVELQCLDADDAKATFDEEEGRDEYDEVAMPV). Tyr-904 carries the phosphotyrosine modification.

This sequence belongs to the anion exchanger (TC 2.A.31) family. In terms of assembly, a dimer in solution, but in its membrane environment, it exists primarily as a mixture of dimers and tetramers and spans the membrane asymmetrically. Component of the ankyrin-1 complex in the erythrocyte, composed of ANK1, RHCE, RHAG, SLC4A1, EPB42, GYPA, GYPB and AQP1. Interacts with STOM; this interaction positively regulates SLC4A1 activity. Interacts with GYPA; a GYPA monomer is bound at each end of the SLC4A1 dimer forming a heterotetramer. Three SLC4A1 dimers (Band 3-I, Band 3-II and Band 3-III) participates in the ankyrin-1 complex. Interacts (via the cytoplasmic domain) with EPB42; this interaction is mediated by the SLC4A1 Band 3-I dimer. Interacts (via the cytoplasmic domain) directly with ANK1; this interaction is mediated by the SLC4A1 Band 3-II and Band 3-III dimers. As to quaternary structure, interacts with TMEM139. (Microbial infection) Interacts (via N-terminus) with P.falciparum (isolate K1) aldolase FBPA; the interaction inhibits FBPA catalytic activity. In terms of assembly, (Microbial infection) Interacts (via the 5ABC region) with P.falciparum (isolate 3D7) MSP9/ABRA (via N-terminus). As to quaternary structure, (Microbial infection) Interacts (via the 5ABC region) with P.falciparum (isolate 3D7) MSP1 p42 subunit. In terms of processing, phosphorylated on Tyr-8 and Tyr-21 most likely by SYK. PP1-resistant phosphorylation that precedes Tyr-359 and Tyr-904 phosphorylation. Post-translationally, phosphorylated on Tyr-359 and Tyr-904 most likely by LYN. PP1-inhibited phosphorylation that follows Tyr-8 and Tyr-21 phosphorylation. N-glycosylated. As to expression, detected in erythrocytes (at protein level). Expressed in kidney (at protein level).

Its subcellular location is the cell membrane. It is found in the basolateral cell membrane. It catalyses the reaction hydrogencarbonate(in) + chloride(out) = hydrogencarbonate(out) + chloride(in). Phenyl isothiocyanate inhibits anion transport in vitro. In terms of biological role, functions both as a transporter that mediates electroneutral anion exchange across the cell membrane and as a structural protein. Component of the ankyrin-1 complex of the erythrocyte membrane; required for normal flexibility and stability of the erythrocyte membrane and for normal erythrocyte shape via the interactions of its cytoplasmic domain with cytoskeletal proteins, glycolytic enzymes, and hemoglobin. Functions as a transporter that mediates the 1:1 exchange of inorganic anions across the erythrocyte membrane. Mediates chloride-bicarbonate exchange in the kidney, and is required for normal acidification of the urine. (Microbial infection) Acts as a receptor for P.falciparum (isolate 3D7) MSP9 and thus, facilitates merozoite invasion of erythrocytes. Acts as a receptor for P.falciparum (isolate 3D7) MSP1 and thus, facilitates merozoite invasion of erythrocytes. The sequence is that of Band 3 anion transport protein from Homo sapiens (Human).